A 360-amino-acid polypeptide reads, in one-letter code: Phosphoserine aminotransferase (360 aa).

Position 41 (Arg41) interacts with L-glutamate. Residues Trp101, Thr152, Asp172, and Gln195 each contribute to the pyridoxal 5'-phosphate site. An N6-(pyridoxal phosphate)lysine modification is found at Lys196. 237–238 (NT) contributes to the pyridoxal 5'-phosphate binding site.

It belongs to the class-V pyridoxal-phosphate-dependent aminotransferase family. SerC subfamily. In terms of assembly, homodimer. It depends on pyridoxal 5'-phosphate as a cofactor.

It localises to the cytoplasm. It catalyses the reaction O-phospho-L-serine + 2-oxoglutarate = 3-phosphooxypyruvate + L-glutamate. The catalysed reaction is 4-(phosphooxy)-L-threonine + 2-oxoglutarate = (R)-3-hydroxy-2-oxo-4-phosphooxybutanoate + L-glutamate. It functions in the pathway amino-acid biosynthesis; L-serine biosynthesis; L-serine from 3-phospho-D-glycerate: step 2/3. The protein operates within cofactor biosynthesis; pyridoxine 5'-phosphate biosynthesis; pyridoxine 5'-phosphate from D-erythrose 4-phosphate: step 3/5. Its function is as follows. Catalyzes the reversible conversion of 3-phosphohydroxypyruvate to phosphoserine and of 3-hydroxy-2-oxo-4-phosphonooxybutanoate to phosphohydroxythreonine. In Burkholderia cenocepacia (strain HI2424), this protein is Phosphoserine aminotransferase.